Reading from the N-terminus, the 164-residue chain is Large ribosomal subunit protein eL21x/eL21w (164 aa).

It belongs to the eukaryotic ribosomal protein eL21 family.

This is Large ribosomal subunit protein eL21x/eL21w (RPL21E) from Arabidopsis thaliana (Mouse-ear cress).